Consider the following 189-residue polypeptide: Elongation factor P (189 aa).

N6-(3,6-diaminohexanoyl)-5-hydroxylysine is present on Lys34.

The protein belongs to the elongation factor P family. May be beta-lysylated on the epsilon-amino group of Lys-34 by the combined action of EpmA and EpmB, and then hydroxylated on the C5 position of the same residue by EpmC (if this protein is present). Lysylation is critical for the stimulatory effect of EF-P on peptide-bond formation. The lysylation moiety may extend toward the peptidyltransferase center and stabilize the terminal 3-CCA end of the tRNA. Hydroxylation of the C5 position on Lys-34 may allow additional potential stabilizing hydrogen-bond interactions with the P-tRNA.

The protein localises to the cytoplasm. The protein operates within protein biosynthesis; polypeptide chain elongation. Functionally, involved in peptide bond synthesis. Alleviates ribosome stalling that occurs when 3 or more consecutive Pro residues or the sequence PPG is present in a protein, possibly by augmenting the peptidyl transferase activity of the ribosome. Modification of Lys-34 is required for alleviation. In Legionella pneumophila (strain Lens), this protein is Elongation factor P.